The primary structure comprises 1060 residues: Carbamoyl phosphate synthase large chain (1060 aa).

Positions 1 to 401 are carboxyphosphate synthetic domain; it reads MPKRTDIRKI…SLLKACRSLE (401 aa). ATP contacts are provided by R129, R169, G175, G176, R208, I210, E215, G241, I242, H243, Q284, and E298. Residues 133-327 enclose the ATP-grasp 1 domain; sequence KQLMEELNQP…IAKLAAKIAV (195 aa). Mg(2+) contacts are provided by Q284, E298, and N300. Mn(2+) is bound by residues Q284, E298, and N300. Residues 402-546 are oligomerization domain; the sequence is IGVDHIKIAD…YSTYAVENES (145 aa). Residues 547 to 929 form a carbamoyl phosphate synthetic domain region; sequence LISDKASILV…ALYKAFEAAY (383 aa). One can recognise an ATP-grasp 2 domain in the interval 671–861; the sequence is EATLQALNIP…MAQVATKVIL (191 aa). ATP contacts are provided by R707, A746, L748, E752, G777, V778, H779, S780, Q820, and E832. Residues Q820, E832, and N834 each coordinate Mg(2+). Residues Q820, E832, and N834 each contribute to the Mn(2+) site. Residues 930-1060 enclose the MGS-like domain; sequence LHMPDYGNIV…SRAFTLKVLD (131 aa). The interval 930–1060 is allosteric domain; sequence LHMPDYGNIV…SRAFTLKVLD (131 aa).

Belongs to the CarB family. Composed of two chains; the small (or glutamine) chain promotes the hydrolysis of glutamine to ammonia, which is used by the large (or ammonia) chain to synthesize carbamoyl phosphate. Tetramer of heterodimers (alpha,beta)4. It depends on Mg(2+) as a cofactor. The cofactor is Mn(2+).

The catalysed reaction is hydrogencarbonate + L-glutamine + 2 ATP + H2O = carbamoyl phosphate + L-glutamate + 2 ADP + phosphate + 2 H(+). It catalyses the reaction hydrogencarbonate + NH4(+) + 2 ATP = carbamoyl phosphate + 2 ADP + phosphate + 2 H(+). It functions in the pathway amino-acid biosynthesis; L-arginine biosynthesis; carbamoyl phosphate from bicarbonate: step 1/1. The protein operates within pyrimidine metabolism; UMP biosynthesis via de novo pathway; (S)-dihydroorotate from bicarbonate: step 1/3. Functionally, large subunit of the glutamine-dependent carbamoyl phosphate synthetase (CPSase). CPSase catalyzes the formation of carbamoyl phosphate from the ammonia moiety of glutamine, carbonate, and phosphate donated by ATP, constituting the first step of 2 biosynthetic pathways, one leading to arginine and/or urea and the other to pyrimidine nucleotides. The large subunit (synthetase) binds the substrates ammonia (free or transferred from glutamine from the small subunit), hydrogencarbonate and ATP and carries out an ATP-coupled ligase reaction, activating hydrogencarbonate by forming carboxy phosphate which reacts with ammonia to form carbamoyl phosphate. The protein is Carbamoyl phosphate synthase large chain of Streptococcus agalactiae serotype Ia (strain ATCC 27591 / A909 / CDC SS700).